The chain runs to 716 residues: MDTKKIFKHIPWVILGIIGAFCLAVVALRRGEHISALWIVVASVSVYLVAYRYYSLYIAQKVMKLDPTRATPAVINNDGLNYVPTNRYVLFGHHFAAIAGAGPLVGPVLAAQMGYLPGTLWLLAGVVLAGAVQDFMVLFISSRRNGASLGEMIKEEMGPVPGTIALFGCFLIMIIILAVLALIVVKALAESPWGVFTVCSTVPIALFMGIYMRFIRPGRVGEVSVIGIVLLVASIYFGGVIAHDPYWGPALTFKDTTITFALIGYAFVSALLPVWLILAPRDYLATFLKIGVIVGLALGIVVLNPELKMPAMTQYIDGTGPLWKGALFPFLFITIACGAVSGFHALISSGTTPKLLANETDARFIGYGAMLMESFVAIMALVAASIIEPGLYFAMNTPPAGLGITMPNLHEMGGENAPIIMAQLKDVTAHAAATVSSWGFVISPEQILQTAKDIGEPSVLNRAGGAPTLAVGIAHVFHKVLPMADMGFWYHFGILFEALFILTALDAGTRSGRFMLQDLLGNFIPFLKKTDSLVAGIIGTAGCVGLWGYLLYQGVVDPLGGVKSLWPLFGISNQMLAAVALVLGTVVLIKMKRTQYIWVTVVPAVWLLICTTWALGLKLFSTNPQMEGFFYMASQYKEKIANGTDLTAQQIANMNHIVVNNYTNAGLSILFLIVVYSIIFYGFKTWLAVRNSDKRTDKETPYVPIPEGGVKISSHH.

Topologically, residues 1–5 (MDTKK) are cytoplasmic. A helical transmembrane segment spans residues 6–26 (IFKHIPWVILGIIGAFCLAVV). Topologically, residues 27 to 30 (ALRR) are periplasmic. Residues 31–51 (GEHISALWIVVASVSVYLVAY) traverse the membrane as a helical segment. At 52–88 (RYYSLYIAQKVMKLDPTRATPAVINNDGLNYVPTNRY) the chain is on the cytoplasmic side. Residues 89 to 109 (VLFGHHFAAIAGAGPLVGPVL) form a helical membrane-spanning segment. Residues 110–119 (AAQMGYLPGT) lie on the Periplasmic side of the membrane. The helical transmembrane segment at 120–140 (LWLLAGVVLAGAVQDFMVLFI) threads the bilayer. Residues 141–163 (SSRRNGASLGEMIKEEMGPVPGT) are Cytoplasmic-facing. A helical transmembrane segment spans residues 164–184 (IALFGCFLIMIIILAVLALIV). Residues 185-191 (VKALAES) lie on the Periplasmic side of the membrane. Residues 192–212 (PWGVFTVCSTVPIALFMGIYM) form a helical membrane-spanning segment. Residues 213 to 222 (RFIRPGRVGE) lie on the Cytoplasmic side of the membrane. The chain crosses the membrane as a helical span at residues 223–243 (VSVIGIVLLVASIYFGGVIAH). Over 244–257 (DPYWGPALTFKDTT) the chain is Periplasmic. A helical membrane pass occupies residues 258 to 278 (ITFALIGYAFVSALLPVWLIL). The Cytoplasmic portion of the chain corresponds to 279–282 (APRD). A helical membrane pass occupies residues 283 to 303 (YLATFLKIGVIVGLALGIVVL). At 304–326 (NPELKMPAMTQYIDGTGPLWKGA) the chain is on the periplasmic side. The helical transmembrane segment at 327–347 (LFPFLFITIACGAVSGFHALI) threads the bilayer. The Cytoplasmic segment spans residues 348-374 (SSGTTPKLLANETDARFIGYGAMLMES). The helical transmembrane segment at 375-395 (FVAIMALVAASIIEPGLYFAM) threads the bilayer. Over 396–484 (NTPPAGLGIT…HVFHKVLPMA (89 aa)) the chain is Periplasmic. The chain crosses the membrane as a helical span at residues 485-505 (DMGFWYHFGILFEALFILTAL). Over 506 to 531 (DAGTRSGRFMLQDLLGNFIPFLKKTD) the chain is Cytoplasmic. Residues 532 to 552 (SLVAGIIGTAGCVGLWGYLLY) traverse the membrane as a helical segment. Residues 553-568 (QGVVDPLGGVKSLWPL) lie on the Periplasmic side of the membrane. A helical transmembrane segment spans residues 569-589 (FGISNQMLAAVALVLGTVVLI). Residues 590-596 (KMKRTQY) are Cytoplasmic-facing. A helical transmembrane segment spans residues 597–617 (IWVTVVPAVWLLICTTWALGL). Topologically, residues 618 to 668 (KLFSTNPQMEGFFYMASQYKEKIANGTDLTAQQIANMNHIVVNNYTNAGLS) are periplasmic. Residues 669–689 (ILFLIVVYSIIFYGFKTWLAV) form a helical membrane-spanning segment. Topologically, residues 690–716 (RNSDKRTDKETPYVPIPEGGVKISSHH) are cytoplasmic. A disordered region spans residues 696–716 (TDKETPYVPIPEGGVKISSHH).

This sequence belongs to the peptide transporter carbon starvation (CstA) (TC 2.A.114) family. In terms of assembly, interacts with BtsS and YpdA.

Its subcellular location is the cell inner membrane. It catalyses the reaction pyruvate(out) + H(+)(out) = pyruvate(in) + H(+)(in). Its activity is regulated as follows. Transport is inhibited by the protonophores 2,4-dinitrophenol (DNP) and carbonyl cyanide m-chlorophenyl hydrazone (CCCP), but not by ionophores such as valinomycin, nonactin and nigericin. Transports pyruvate with a high affinity and specificity. The process is driven by the proton motive force. Under nutrient limiting conditions, mediates the uptake of pyruvate, thus enabling it to be used as a carbon source for the growth and survival. Part of a nutrient-sensing regulatory network composed of the two-component regulatory systems BtsS/BtsR and YpdA/YpdB, and their respective target proteins, BtsT and YhjX. This Escherichia coli (strain K12) protein is Pyruvate/proton symporter BtsT.